A 296-amino-acid polypeptide reads, in one-letter code: tRNA uridine(34) hydroxylase (296 aa).

The Rhodanese domain occupies 130 to 225 (RGEDVVFFDG…YGEAYGDRGL (96 aa)). Cys-185 serves as the catalytic Cysteine persulfide intermediate.

The protein belongs to the TrhO family.

The catalysed reaction is uridine(34) in tRNA + AH2 + O2 = 5-hydroxyuridine(34) in tRNA + A + H2O. Catalyzes oxygen-dependent 5-hydroxyuridine (ho5U) modification at position 34 in tRNAs. This Kocuria rhizophila (strain ATCC 9341 / DSM 348 / NBRC 103217 / DC2201) protein is tRNA uridine(34) hydroxylase.